The chain runs to 99 residues: MNQERVFKVLLGPHVSEKATVLAEKKGQFVFKVATDATKLEIKKAVEGLFNVKVENVSTVNVLGKTKRTARGLGKRNDWKKAIVSLQPGQDLDFSSSAE.

This sequence belongs to the universal ribosomal protein uL23 family. In terms of assembly, part of the 50S ribosomal subunit. Contacts protein L29, and trigger factor when it is bound to the ribosome.

Functionally, one of the early assembly proteins it binds 23S rRNA. One of the proteins that surrounds the polypeptide exit tunnel on the outside of the ribosome. Forms the main docking site for trigger factor binding to the ribosome. This Pseudomonas entomophila (strain L48) protein is Large ribosomal subunit protein uL23.